Reading from the N-terminus, the 758-residue chain is Translation initiation factor IF-2 (758 aa).

Residues 55–168 form a disordered region; the sequence is EKNVGKQATQ…KTHQPSIPVK (114 aa). 2 stretches are compositionally biased toward polar residues: residues 60-78 and 86-95; these read KQAT…QQNH and QRQQSATSKP. Over residues 96–136 the composition is skewed to low complexity; it reads KVNNQQHSNSSNEKSKNTKGNQNRNMTQNNNNNNNNNNNNR. The tr-type G domain occupies 259–428; that stretch reads ERPPVVTIMG…LLVAEVGELK (170 aa). Positions 268–275 are G1; the sequence is GHVDHGKT. Position 268 to 275 (268 to 275) interacts with GTP; sequence GHVDHGKT. Positions 293 to 297 are G2; it reads GITQH. The interval 314-317 is G3; that stretch reads DTPG. Residues 314-318 and 368-371 contribute to the GTP site; these read DTPGH and NKMD. The interval 368–371 is G4; that stretch reads NKMD. Residues 404-406 form a G5 region; the sequence is SAL.

It belongs to the TRAFAC class translation factor GTPase superfamily. Classic translation factor GTPase family. IF-2 subfamily.

The protein resides in the cytoplasm. Functionally, one of the essential components for the initiation of protein synthesis. Protects formylmethionyl-tRNA from spontaneous hydrolysis and promotes its binding to the 30S ribosomal subunits. Also involved in the hydrolysis of GTP during the formation of the 70S ribosomal complex. The sequence is that of Translation initiation factor IF-2 from Lysinibacillus sphaericus (strain C3-41).